The following is a 154-amino-acid chain: 3-hydroxyacyl-[acyl-carrier-protein] dehydratase FabZ (154 aa).

The active site involves His55.

This sequence belongs to the thioester dehydratase family. FabZ subfamily.

It is found in the cytoplasm. The catalysed reaction is a (3R)-hydroxyacyl-[ACP] = a (2E)-enoyl-[ACP] + H2O. In terms of biological role, involved in unsaturated fatty acids biosynthesis. Catalyzes the dehydration of short chain beta-hydroxyacyl-ACPs and long chain saturated and unsaturated beta-hydroxyacyl-ACPs. This is 3-hydroxyacyl-[acyl-carrier-protein] dehydratase FabZ from Nitratidesulfovibrio vulgaris (strain ATCC 29579 / DSM 644 / CCUG 34227 / NCIMB 8303 / VKM B-1760 / Hildenborough) (Desulfovibrio vulgaris).